Reading from the N-terminus, the 115-residue chain is Photosystem II reaction center Psb28 protein (115 aa).

It belongs to the Psb28 family. Part of the photosystem II complex.

It is found in the plastid. It localises to the chloroplast thylakoid membrane. This is Photosystem II reaction center Psb28 protein from Phaeodactylum tricornutum (strain CCAP 1055/1).